Reading from the N-terminus, the 444-residue chain is MFS-type transporter dbaD (444 aa).

Over residues 1–13 (MTEQPPQNHSVDL) the composition is skewed to polar residues. Residues 1–57 (MTEQPPQNHSVDLNQNEDNNENDYRSSSATDAERPCEPKIEESTAKPPTGPPAPPPP) are disordered. An N-linked (GlcNAc...) asparagine glycan is attached at asparagine 8. Over residues 31–44 (DAERPCEPKIEEST) the composition is skewed to basic and acidic residues. Residues 48 to 57 (PTGPPAPPPP) show a composition bias toward pro residues. The next 11 membrane-spanning stretches (helical) occupy residues 62–82 (LVAW…WGIM), 107–127 (WIGS…GSIY), 134–154 (ALLV…SLCK), 159–179 (VLLA…VPCV), 192–212 (TALG…PIVL), 223–243 (WSVR…IAVM), 267–287 (MAFT…LFYI), 301–323 (MAFY…PNAM), 330–350 (FNLI…LLAV), 356–376 (LIVI…LPPL), and 394–414 (MGFG…GAIL). Residue asparagine 421 is glycosylated (N-linked (GlcNAc...) asparagine). The helical transmembrane segment at 424 to 444 (GLWVYGGVTSLVAGFIICIAV) threads the bilayer.

It belongs to the major facilitator superfamily. Monocarboxylate porter (TC 2.A.1.13) family.

It localises to the cell membrane. Functionally, MFS-type transporter; part of the gene cluster that mediates the biosynthesis of the antibiotic 2,4- dihydroxy-3-methyl-6-(2-oxopropyl)benzaldehyde (DHMBA) and its derivatives. Is probably involved in the transport of the metabolites to the environment. The polypeptide is MFS-type transporter dbaD (Emericella nidulans (strain FGSC A4 / ATCC 38163 / CBS 112.46 / NRRL 194 / M139) (Aspergillus nidulans)).